Consider the following 438-residue polypeptide: RING finger protein 150 (438 aa).

The signal sequence occupies residues M1 to A34. Residues E35 to S208 lie on the Extracellular side of the membrane. 4 N-linked (GlcNAc...) asparagine glycosylation sites follow: N45, N125, N153, and N186. Positions S81–L183 constitute a PA domain. The helical transmembrane segment at V209–F229 threads the bilayer. Residues Y230–S438 lie on the Cytoplasmic side of the membrane. The RING-type; atypical zinc finger occupies C278–K319.

Its subcellular location is the membrane. In Homo sapiens (Human), this protein is RING finger protein 150 (RNF150).